We begin with the raw amino-acid sequence, 259 residues long: O-antigen export system permease protein RfbA (259 aa).

Transmembrane regions (helical) follow at residues 33 to 53 (FGYL…YFIF), 73 to 95 (FPWQ…NAQI), 111 to 131 (VMME…FLFV), 142 to 162 (WGIP…SIIF), 176 to 196 (VSLG…SDMI), and 228 to 248 (EYIS…LAIF). The ABC transmembrane type-2 domain maps to 33-251 (FGYLWSIANP…IVGLAIFNKL (219 aa)).

The protein belongs to the ABC-2 integral membrane protein family.

Its subcellular location is the cell inner membrane. Functionally, may form an ATP-driven O-antigen export apparatus, in association with RfbB. This is O-antigen export system permease protein RfbA (rfbA) from Klebsiella pneumoniae.